The chain runs to 527 residues: F-box protein SKIP2 (527 aa).

The F-box domain occupies 39–85 (DRDFTGDLPDECLAHVFQFLGAGDRKRCSLVCKRWLLVDGQSRHRLS).

In terms of assembly, part of a SCF (ASK-cullin-F-box) protein ligase complex. Interacts with SKP1A/ASK1, SKP1B/ASK2 and ASK11.

The protein resides in the nucleus. It functions in the pathway protein modification; protein ubiquitination. Its function is as follows. Component of SCF(ASK-cullin-F-box) E3 ubiquitin ligase complexes, which may mediate the ubiquitination and subsequent proteasomal degradation of target proteins. The chain is F-box protein SKIP2 (SKIP2) from Arabidopsis thaliana (Mouse-ear cress).